Consider the following 152-residue polypeptide: uncharacterized protein (152 aa).

A signal peptide spans 1–24; sequence MRKMLAYTLYIVTYLTYIMNEVEC.

This is an uncharacterized protein from Acheta domesticus (House cricket).